The following is a 262-amino-acid chain: Tetrahydromethanopterin S-methyltransferase subunit C (262 aa).

A run of 7 helical transmembrane segments spans residues 27–47, 72–92, 98–118, 145–165, 173–193, 200–220, and 222–242; these read LVGI…GGLL, PSIG…GVLI, LPVL…GFIV, ALAI…DIII, VIAL…NACI, KRTM…FAIA, and LDIV…GTFV.

The protein belongs to the MtrC family. In terms of assembly, the complex is composed of 8 subunits; MtrA, MtrB, MtrC, MtrD, MtrE, MtrF, MtrG and MtrH.

Its subcellular location is the cell membrane. It carries out the reaction 5-methyl-5,6,7,8-tetrahydromethanopterin + coenzyme M + 2 Na(+)(in) = 5,6,7,8-tetrahydromethanopterin + methyl-coenzyme M + 2 Na(+)(out). It participates in one-carbon metabolism; methanogenesis from CO(2); methyl-coenzyme M from 5,10-methylene-5,6,7,8-tetrahydromethanopterin: step 2/2. In terms of biological role, part of a complex that catalyzes the formation of methyl-coenzyme M and tetrahydromethanopterin from coenzyme M and methyl-tetrahydromethanopterin. This is an energy-conserving, sodium-ion translocating step. The polypeptide is Tetrahydromethanopterin S-methyltransferase subunit C (Methanococcus maripaludis (strain C5 / ATCC BAA-1333)).